Reading from the N-terminus, the 96-residue chain is Co-chaperonin GroES (96 aa).

Belongs to the GroES chaperonin family. Heptamer of 7 subunits arranged in a ring. Interacts with the chaperonin GroEL.

Its subcellular location is the cytoplasm. Together with the chaperonin GroEL, plays an essential role in assisting protein folding. The GroEL-GroES system forms a nano-cage that allows encapsulation of the non-native substrate proteins and provides a physical environment optimized to promote and accelerate protein folding. GroES binds to the apical surface of the GroEL ring, thereby capping the opening of the GroEL channel. This is Co-chaperonin GroES from Methylobacterium radiotolerans (strain ATCC 27329 / DSM 1819 / JCM 2831 / NBRC 15690 / NCIMB 10815 / 0-1).